A 1405-amino-acid polypeptide reads, in one-letter code: DNA-directed RNA polymerase subunit beta' (1405 aa).

Zn(2+) contacts are provided by C71, C73, C86, and C89. Positions 462, 464, and 466 each coordinate Mg(2+). Zn(2+)-binding residues include C810, C884, C891, and C894.

This sequence belongs to the RNA polymerase beta' chain family. In terms of assembly, the RNAP catalytic core consists of 2 alpha, 1 beta, 1 beta' and 1 omega subunit. When a sigma factor is associated with the core the holoenzyme is formed, which can initiate transcription. Mg(2+) serves as cofactor. Requires Zn(2+) as cofactor.

It carries out the reaction RNA(n) + a ribonucleoside 5'-triphosphate = RNA(n+1) + diphosphate. In terms of biological role, DNA-dependent RNA polymerase catalyzes the transcription of DNA into RNA using the four ribonucleoside triphosphates as substrates. The polypeptide is DNA-directed RNA polymerase subunit beta' (Maricaulis maris (strain MCS10) (Caulobacter maris)).